We begin with the raw amino-acid sequence, 356 residues long: Protein RecA (356 aa).

68–75 is a binding site for ATP; that stretch reads GPESSGKT.

This sequence belongs to the RecA family.

The protein localises to the cytoplasm. Functionally, can catalyze the hydrolysis of ATP in the presence of single-stranded DNA, the ATP-dependent uptake of single-stranded DNA by duplex DNA, and the ATP-dependent hybridization of homologous single-stranded DNAs. It interacts with LexA causing its activation and leading to its autocatalytic cleavage. The polypeptide is Protein RecA (Clostridium botulinum (strain Eklund 17B / Type B)).